Here is a 418-residue protein sequence, read N- to C-terminus: Pestheic acid cluster transcriptional regulator 1 (418 aa).

Residues 244 to 272 are disordered; it reads GTAVTTTATTSSSFISKSSEEPSPKRIKP. Positions 245-260 are enriched in low complexity; the sequence is TAVTTTATTSSSFISK.

The protein localises to the nucleus. Its function is as follows. Transcription factor that, with ptaR2 and ptaR3, coregulates the expression of the gene cluster that mediates the biosynthesis of pestheic acid, a diphenyl ether which is a biosynthetic precursor of the unique chloropupukeananes. The protein is Pestheic acid cluster transcriptional regulator 1 of Pestalotiopsis fici (strain W106-1 / CGMCC3.15140).